The sequence spans 885 residues: DNA mismatch repair protein MutS (885 aa).

626 to 633 (GPNMGGKS) lines the ATP pocket.

This sequence belongs to the DNA mismatch repair MutS family.

This protein is involved in the repair of mismatches in DNA. It is possible that it carries out the mismatch recognition step. This protein has a weak ATPase activity. The polypeptide is DNA mismatch repair protein MutS (Burkholderia lata (strain ATCC 17760 / DSM 23089 / LMG 22485 / NCIMB 9086 / R18194 / 383)).